Reading from the N-terminus, the 279-residue chain is Putative polysaccharide deacetylase YxkH (279 aa).

A signal peptide spans 1–19; the sequence is MKRLFLSIFLLGSCLALAA. The N-palmitoyl cysteine moiety is linked to residue cysteine 20. A lipid anchor (S-diacylglycerol cysteine) is attached at cysteine 20. Residues 29–51 form a disordered region; that stretch reads QPMPKAEQKKPEKKAVQVQKKED. Residues 34 to 51 show a composition bias toward basic and acidic residues; the sequence is AEQKKPEKKAVQVQKKED. The region spanning 119–279 is the NodB homology domain; it reads KCVLITFDDG…AFGAYIESMK (161 aa).

The protein belongs to the polysaccharide deacetylase family.

The protein localises to the cell membrane. The sequence is that of Putative polysaccharide deacetylase YxkH (yxkH) from Bacillus subtilis (strain 168).